The primary structure comprises 280 residues: Small ribosomal subunit protein uS2 (280 aa).

It belongs to the universal ribosomal protein uS2 family.

The sequence is that of Small ribosomal subunit protein uS2 from Desulforapulum autotrophicum (strain ATCC 43914 / DSM 3382 / VKM B-1955 / HRM2) (Desulfobacterium autotrophicum).